A 294-amino-acid chain; its full sequence is Probable 2-(5''-triphosphoribosyl)-3'-dephosphocoenzyme-A synthase (294 aa).

Belongs to the CitG/MdcB family.

It carries out the reaction 3'-dephospho-CoA + ATP = 2'-(5''-triphospho-alpha-D-ribosyl)-3'-dephospho-CoA + adenine. In Streptococcus pyogenes serotype M2 (strain MGAS10270), this protein is Probable 2-(5''-triphosphoribosyl)-3'-dephosphocoenzyme-A synthase.